The primary structure comprises 575 residues: Physarolisin (575 aa).

Residues 1–18 (MRLLSLLFLLGLATLSFA) form the signal peptide. Residues 19 to 173 (VRSQWAQQGR…SIKNARTQVG (155 aa)) constitute a propeptide, removed in mature form. Residues 179-574 (YIVPYVIFDL…SKLLAFVQTL (396 aa)) enclose the Peptidase S53 domain. The N-linked (GlcNAc...) asparagine glycan is linked to Asn200. Residues Glu248 and Asp252 each act as charge relay system in the active site. 4 N-linked (GlcNAc...) asparagine glycosylation sites follow: Asn262, Asn307, Asn380, and Asn453. Residue Ser484 is the Charge relay system of the active site. Residues Asp529, Ile530, Gly552, and Asp554 each contribute to the Ca(2+) site.

Requires Ca(2+) as cofactor. Post-translationally, autocatalytically processed. In terms of processing, N-glycosylated.

It catalyses the reaction Milk clotting activity. Preferential cleavage of 8-Gly-|-Ser-9 in B chain of insulin most rapidly, followed by 11-Leu-|-Val-12, 19-Cys(SO(3)H)-|-Gly and 24-Phe-|-Phe-25. No action on Ac-Phe-Tyr(I)2.. Inhibited by diisopropylfluorophosphate (DFP) and diazoacetyl-D,L-norleucine methyl ester (DAN). The chain is Physarolisin from Physarum polycephalum (Slime mold).